A 508-amino-acid chain; its full sequence is Ribose import ATP-binding protein RbsA 2 (508 aa).

ABC transporter domains lie at 6–241 (LTIH…VGRE) and 254–499 (ERSG…SGMG). ATP is bound at residue 38–45 (GENGAGKS).

Belongs to the ABC transporter superfamily. Ribose importer (TC 3.A.1.2.1) family. In terms of assembly, the complex is composed of an ATP-binding protein (RbsA), two transmembrane proteins (RbsC) and a solute-binding protein (RbsB).

Its subcellular location is the cell inner membrane. The enzyme catalyses D-ribose(out) + ATP + H2O = D-ribose(in) + ADP + phosphate + H(+). In terms of biological role, part of the ABC transporter complex RbsABC involved in ribose import. Responsible for energy coupling to the transport system. The sequence is that of Ribose import ATP-binding protein RbsA 2 from Rhizobium etli (strain ATCC 51251 / DSM 11541 / JCM 21823 / NBRC 15573 / CFN 42).